The sequence spans 379 residues: Cobalt-precorrin-5B C(1)-methyltransferase (379 aa).

This sequence belongs to the CbiD family.

The catalysed reaction is Co-precorrin-5B + S-adenosyl-L-methionine = Co-precorrin-6A + S-adenosyl-L-homocysteine. It participates in cofactor biosynthesis; adenosylcobalamin biosynthesis; cob(II)yrinate a,c-diamide from sirohydrochlorin (anaerobic route): step 6/10. Its function is as follows. Catalyzes the methylation of C-1 in cobalt-precorrin-5B to form cobalt-precorrin-6A. The chain is Cobalt-precorrin-5B C(1)-methyltransferase from Salmonella paratyphi B (strain ATCC BAA-1250 / SPB7).